The following is a 558-amino-acid chain: MSSESEIPPLSSSTAAAEESGEKTSKKAAKKEAAKLEKLRRRQEQEEATRRTASISLEENDEFSNNYGDVTLTELQSSADPKAGKWIEAVEGKEWTDVSDLVEEMLESEVLIRGRVHTNRPTSNKLGFVVLRESGSTVQCVVSQSEKTKVGANMVKYLKQLSRESFVDVIGVVTLPKEPLTGTTQQVEIQVRKVYCINKSLAKLPLSVEDAARSEADIEASLQTPSPAARVNQDTRLNYRVLDLRTPANQAIFQLQYEVEYAFREKLRFKNFVGIHTPKLMAGSSEGGSAVFRLEYKGQPACLAQSPQLHKQMAICGDLRRVFEVGPVFRAEDSFTHRHLCEFVGLDVEMEIRKHYSEIMDLVDELFVFIFTSLNERCKKELQAVGKQYPFEPLKFLPKTLRLTFEEGVQMLKEAGVEVDPLGDLNTESERKLGQLVLEKYNTEFYILHRYPKAVRPFYTMTCADNPLYSNSFDVFIRGEEIISGAQRVHIPEVLEQRAGECGIDVKTISTYIDSFRYGAPLHGGFGVGLERVVMLFCALNNIRKTSLFPRDPQRLSP.

Residues 1–18 (MSSESEIPPLSSSTAAAE) are compositionally biased toward low complexity. Residues 1 to 57 (MSSESEIPPLSSSTAAAEESGEKTSKKAAKKEAAKLEKLRRRQEQEEATRRTASISL) are disordered. Ser2 carries the post-translational modification N-acetylserine. Positions 20-50 (SGEKTSKKAAKKEAAKLEKLRRRQEQEEATR) are enriched in basic and acidic residues. Positions 110-195 (VLIRGRVHTN…QVEIQVRKVY (86 aa)) form a DNA-binding region, OB. Glu286 lines the L-aspartate pocket. The segment at 308–311 (QLHK) is aspartate. Arg330 is an L-aspartate binding site. ATP is bound by residues 330-332 (RAE), 338-340 (RHL), and Glu481. Mg(2+) is bound by residues Glu481 and Ser484. Ser484 and Arg488 together coordinate L-aspartate. 529–532 (GLER) lines the ATP pocket.

It belongs to the class-II aminoacyl-tRNA synthetase family. Type 2 subfamily.

It is found in the cytoplasm. The protein resides in the cytosol. It localises to the endoplasmic reticulum. It carries out the reaction tRNA(Asp) + L-aspartate + ATP = L-aspartyl-tRNA(Asp) + AMP + diphosphate. Functionally, catalyzes the specific attachment of an amino acid to its cognate tRNA in a 2 step reaction: the amino acid (AA) is first activated by ATP to form AA-AMP and then transferred to the acceptor end of the tRNA. Involved in the perception of beta-aminobutyric acid (BABA) and required for BABA priming effect in disease resistance. This Arabidopsis thaliana (Mouse-ear cress) protein is Aspartate--tRNA ligase 2, cytoplasmic.